A 276-amino-acid chain; its full sequence is ADP-dependent (S)-NAD(P)H-hydrate dehydratase (276 aa).

The 265-residue stretch at 5–269 (TPKAMCAWIP…EELPTYLKIF (265 aa)) folds into the YjeF C-terminal domain. The (6S)-NADPHX site is built by alanine 40, glycine 103, and histidine 152. Glycine 211 contributes to the AMP binding site. A (6S)-NADPHX-binding site is contributed by aspartate 212.

It belongs to the NnrD/CARKD family. Homotetramer. Requires Mg(2+) as cofactor.

It catalyses the reaction (6S)-NADHX + ADP = AMP + phosphate + NADH + H(+). The catalysed reaction is (6S)-NADPHX + ADP = AMP + phosphate + NADPH + H(+). Its function is as follows. Catalyzes the dehydration of the S-form of NAD(P)HX at the expense of ADP, which is converted to AMP. Together with NAD(P)HX epimerase, which catalyzes the epimerization of the S- and R-forms, the enzyme allows the repair of both epimers of NAD(P)HX, a damaged form of NAD(P)H that is a result of enzymatic or heat-dependent hydration. The protein is ADP-dependent (S)-NAD(P)H-hydrate dehydratase of Listeria monocytogenes serovar 1/2a (strain ATCC BAA-679 / EGD-e).